Consider the following 334-residue polypeptide: N-acetyl-gamma-glutamyl-phosphate reductase (334 aa).

The active site involves Cys-145. The tract at residues 173-192 (GISGSGQDPTEGTHYPNVTQ) is disordered.

Belongs to the NAGSA dehydrogenase family. Type 1 subfamily.

It localises to the cytoplasm. The enzyme catalyses N-acetyl-L-glutamate 5-semialdehyde + phosphate + NADP(+) = N-acetyl-L-glutamyl 5-phosphate + NADPH + H(+). It participates in amino-acid biosynthesis; L-arginine biosynthesis; N(2)-acetyl-L-ornithine from L-glutamate: step 3/4. Catalyzes the NADPH-dependent reduction of N-acetyl-5-glutamyl phosphate to yield N-acetyl-L-glutamate 5-semialdehyde. This is N-acetyl-gamma-glutamyl-phosphate reductase from Methanocella arvoryzae (strain DSM 22066 / NBRC 105507 / MRE50).